The sequence spans 67 residues: MPKLKTKSGAKKRFVPKKSGKVKFRRAGVRHLATFGKTKKQKRHLRGTDHLAPMDEKKIKECFPYAR.

A disordered region spans residues 1–20 (MPKLKTKSGAKKRFVPKKSG).

This sequence belongs to the bacterial ribosomal protein bL35 family.

This is Large ribosomal subunit protein bL35 from Anaeromyxobacter dehalogenans (strain 2CP-C).